The chain runs to 78 residues: Probable [Fe-S]-dependent transcriptional repressor (78 aa).

Iron-sulfur cluster-binding residues include Cys-56, Cys-61, Cys-64, and Cys-70.

The protein belongs to the FeoC family.

In terms of biological role, may function as a transcriptional regulator that controls feoABC expression. The polypeptide is Probable [Fe-S]-dependent transcriptional repressor (Escherichia fergusonii (strain ATCC 35469 / DSM 13698 / CCUG 18766 / IAM 14443 / JCM 21226 / LMG 7866 / NBRC 102419 / NCTC 12128 / CDC 0568-73)).